A 335-amino-acid polypeptide reads, in one-letter code: Deoxyhypusine hydroxylase (335 aa).

5 HEAT-like PBS-type repeats span residues 71–97 (LKHE…VAKD), 104–130 (CRHE…LRDN), 200–233 (LRYR…GLKD), 238–264 (FRHE…ALSN), and 271–298 (VRHE…FLND). Residues histidine 73, glutamate 74, histidine 106, and glutamate 107 each coordinate Fe cation. Positions 240, 241, 273, and 274 each coordinate Fe cation.

This sequence belongs to the deoxyhypusine hydroxylase family. Fe(2+) is required as a cofactor.

Its subcellular location is the cytoplasm. The protein resides in the nucleus. It catalyses the reaction [eIF5A protein]-deoxyhypusine + AH2 + O2 = [eIF5A protein]-hypusine + A + H2O. The protein operates within protein modification; eIF5A hypusination. Functionally, catalyzes the hydroxylation of the N(6)-(4-aminobutyl)-L-lysine intermediate to form hypusine, an essential post-translational modification only found in mature eIF-5A factor. In Neosartorya fischeri (strain ATCC 1020 / DSM 3700 / CBS 544.65 / FGSC A1164 / JCM 1740 / NRRL 181 / WB 181) (Aspergillus fischerianus), this protein is Deoxyhypusine hydroxylase (lia1).